Reading from the N-terminus, the 197-residue chain is Holliday junction branch migration complex subunit RuvA (197 aa).

A domain I region spans residues 1 to 63; that stretch reads MYAYLKGIIT…EDAHLLYGFR (63 aa). Residues 64–142 form a domain II region; that stretch reads SEDEKKLFLS…VAGDDLPAKV (79 aa). A flexible linker region spans residues 143-147; the sequence is AVQAS. Positions 148–197 are domain III; that stretch reads AENQELEEAMEAMLALGYKATELKKIKKFFEGTTDTAENYIKSALKMLVK.

This sequence belongs to the RuvA family. In terms of assembly, homotetramer. Forms an RuvA(8)-RuvB(12)-Holliday junction (HJ) complex. HJ DNA is sandwiched between 2 RuvA tetramers; dsDNA enters through RuvA and exits via RuvB. An RuvB hexamer assembles on each DNA strand where it exits the tetramer. Each RuvB hexamer is contacted by two RuvA subunits (via domain III) on 2 adjacent RuvB subunits; this complex drives branch migration. In the full resolvosome a probable DNA-RuvA(4)-RuvB(12)-RuvC(2) complex forms which resolves the HJ.

It localises to the cytoplasm. In terms of biological role, the RuvA-RuvB-RuvC complex processes Holliday junction (HJ) DNA during genetic recombination and DNA repair, while the RuvA-RuvB complex plays an important role in the rescue of blocked DNA replication forks via replication fork reversal (RFR). RuvA specifically binds to HJ cruciform DNA, conferring on it an open structure. The RuvB hexamer acts as an ATP-dependent pump, pulling dsDNA into and through the RuvAB complex. HJ branch migration allows RuvC to scan DNA until it finds its consensus sequence, where it cleaves and resolves the cruciform DNA. The sequence is that of Holliday junction branch migration complex subunit RuvA from Streptococcus pneumoniae serotype 19F (strain G54).